A 136-amino-acid chain; its full sequence is Phospholipase A2 (136 aa).

Positions 8, 10, and 12 each coordinate Ca(2+). 5 disulfide bridges follow: Cys-9/Cys-31, Cys-30/Cys-70, Cys-37/Cys-63, Cys-61/Cys-95, and Cys-105/Cys-117. Residue Asn-16 is glycosylated (N-linked (GlcNAc...) asparagine). His-34 is an active-site residue. Residue Asp-35 coordinates Ca(2+). Asp-64 is a catalytic residue.

It belongs to the phospholipase A2 family. Ca(2+) serves as cofactor. As to expression, expressed by the venom gland.

It localises to the secreted. The enzyme catalyses a 1,2-diacyl-sn-glycero-3-phosphocholine + H2O = a 1-acyl-sn-glycero-3-phosphocholine + a fatty acid + H(+). Its function is as follows. PLA2 catalyzes the calcium-dependent hydrolysis of the 2-acyl groups in 3-sn-phosphoglycerides. The polypeptide is Phospholipase A2 (Bombus terrestris (Buff-tailed bumblebee)).